Here is a 418-residue protein sequence, read N- to C-terminus: ATP-dependent RNA helicase RhlB (418 aa).

Residues 9–37 (TKFADLPLEKSLISGLTSQGYEYCTPIQA) carry the Q motif motif. Residues 40–219 (LPITLTGKDI…FEHMNDPESI (180 aa)) enclose the Helicase ATP-binding domain. 53 to 60 (AQTGTGKT) contacts ATP. The DEAD box motif lies at 165–168 (DEAD). Residues 243-390 (KILLLLSLIE…CSEYDKNAML (148 aa)) enclose the Helicase C-terminal domain.

It belongs to the DEAD box helicase family. RhlB subfamily. In terms of assembly, component of the RNA degradosome, which is a multiprotein complex involved in RNA processing and mRNA degradation.

It is found in the cytoplasm. It catalyses the reaction ATP + H2O = ADP + phosphate + H(+). In terms of biological role, DEAD-box RNA helicase involved in RNA degradation. Has RNA-dependent ATPase activity and unwinds double-stranded RNA. This chain is ATP-dependent RNA helicase RhlB, found in Psychromonas ingrahamii (strain DSM 17664 / CCUG 51855 / 37).